The sequence spans 417 residues: 3-oxo-isoapionate-4-phosphate decarboxylase (417 aa).

Lys177, Asp179, and Glu180 together coordinate Mg(2+). Position 177 is an N6-carboxylysine (Lys177).

The protein belongs to the RuBisCO large chain family. The cofactor is Mg(2+).

The enzyme catalyses 3-oxoisoapionate 4-phosphate + H(+) = L-erythrulose 1-phosphate + CO2. It functions in the pathway carbohydrate metabolism. In terms of biological role, involved in catabolism of D-apiose. Catalyzes the decarboxylation of 3-oxo-isoapionate 4-phosphate to L-erythrulose 1-phosphate. The polypeptide is 3-oxo-isoapionate-4-phosphate decarboxylase (Rhizobium etli (strain ATCC 51251 / DSM 11541 / JCM 21823 / NBRC 15573 / CFN 42)).